The sequence spans 708 residues: Leucine-rich repeat neuronal protein 3 (708 aa).

Residues 1 to 22 (MKDMPLRIHVLLGLAITTLVQA) form the signal peptide. The LRRNT domain occupies 23–69 (VDKKVDCPRLCTCEIRPWFTPRSIYMEASTVDCNDLGLLTFPARLPA). Topologically, residues 23-628 (VDKKVDCPRL…KEYEKNNTTT (606 aa)) are extracellular. LRR repeat units lie at residues 70-91 (NTQILLLQTNNIAKIEYSTDFP), 93-114 (NLTGLDLSQNNLSSVTNINVKK), 117-138 (QLLSVYLEENKLTELPEKCLSE), 141-162 (NLQELYINHNLLSTISPGAFIG), 165-186 (NLLRLHLNSNRLQMINSKWFDA), 189-210 (NLEILMIGENPIIRIKDMNFKP), 213-234 (NLRSLVIAGINLTEIPDNALVG), 237-258 (NLESISFYDNRLIKVPHVALQK), 261-282 (NLKFLDLNKNPINRIRRGDFSN), 285-304 (HLKELGINNMPELISIDSLA), 310-332 (DLRKIEATNNPRLSYIHPNAFFR), and 335-358 (KLESLMLNSNALSALYHGTIESLP). Asn-93 and Asn-103 each carry an N-linked (GlcNAc...) asparagine glycan. Asn-223 carries an N-linked (GlcNAc...) asparagine glycan. Residues 368–421 (NPIRCDCVIRWMNMNKTNIRFMEPDSLFCVDPPEFQGQNVRQVHFRDMMEICLP) enclose the LRRCT domain. Residue Asn-382 is glycosylated (N-linked (GlcNAc...) asparagine). An Ig-like C2-type domain is found at 421-514 (PLIAPESFPS…DLKSVMIKVD (94 aa)). An intrachain disulfide couples Cys-444 to Cys-496. Asn-522, Asn-579, Asn-608, Asn-624, and Asn-625 each carry an N-linked (GlcNAc...) asparagine glycan. The Fibronectin type-III domain occupies 523-617 (GSLNIKIRDI…NVTTKGLHPD (95 aa)). Residues 629-649 (LMACLGGLLGIIGVICLISCL) traverse the membrane as a helical segment. At 650 to 708 (SPEMNCDGGHSYVRNYLQKPTFALGELYPPLINLWEAGKEKSTSLKVKATVIGLPTNMS) the chain is on the cytoplasmic side.

Its subcellular location is the membrane. The sequence is that of Leucine-rich repeat neuronal protein 3 (LRRN3) from Homo sapiens (Human).